The chain runs to 132 residues: Small ribosomal subunit protein uS8c (132 aa).

It belongs to the universal ribosomal protein uS8 family. In terms of assembly, part of the 30S ribosomal subunit.

It localises to the plastid. The protein resides in the chloroplast. In terms of biological role, one of the primary rRNA binding proteins, it binds directly to 16S rRNA central domain where it helps coordinate assembly of the platform of the 30S subunit. The chain is Small ribosomal subunit protein uS8c (rps8) from Anthoceros angustus (Hornwort).